The following is a 206-amino-acid chain: Isochorismatase family protein 1B (206 aa).

The protein belongs to the isochorismatase family.

This chain is Isochorismatase family protein 1B, found in Dictyostelium discoideum (Social amoeba).